We begin with the raw amino-acid sequence, 309 residues long: Protein-L-isoaspartate O-methyltransferase (309 aa).

Positions 1-46 (MSGERAKRFPLALEDLKRAPRKSDGRAGERHAAIAAPKAADKPAAV) are disordered. Over residues 14–32 (EDLKRAPRKSDGRAGERHA) the composition is skewed to basic and acidic residues. Over residues 33-46 (AIAAPKAADKPAAV) the composition is skewed to low complexity. Ser-156 is a catalytic residue.

The protein belongs to the methyltransferase superfamily. L-isoaspartyl/D-aspartyl protein methyltransferase family.

It localises to the cytoplasm. It carries out the reaction [protein]-L-isoaspartate + S-adenosyl-L-methionine = [protein]-L-isoaspartate alpha-methyl ester + S-adenosyl-L-homocysteine. Catalyzes the methyl esterification of L-isoaspartyl residues in peptides and proteins that result from spontaneous decomposition of normal L-aspartyl and L-asparaginyl residues. It plays a role in the repair and/or degradation of damaged proteins. In Burkholderia vietnamiensis (strain G4 / LMG 22486) (Burkholderia cepacia (strain R1808)), this protein is Protein-L-isoaspartate O-methyltransferase.